The following is a 183-amino-acid chain: UPF0200 protein MmarC6_1392 (183 aa).

An ATP-binding site is contributed by 8 to 15 (GMPGSGKS).

The protein belongs to the UPF0200 family.

The sequence is that of UPF0200 protein MmarC6_1392 from Methanococcus maripaludis (strain C6 / ATCC BAA-1332).